Here is a 1043-residue protein sequence, read N- to C-terminus: Protein translocase subunit SecA (1043 aa).

Residues Gln-143, 161–165 (GEGKT), and Asp-665 contribute to the ATP site. Low complexity predominate over residues 980 to 1005 (ATAAPAAETTTTAKAADAARQQPPAA). Positions 980 to 1043 (ATAAPAAETT…KYKHCHGRNA (64 aa)) are disordered. Positions 1008 to 1022 (EEQKRQPVHVEKTPG) are enriched in basic and acidic residues. Residues Cys-1027, Cys-1029, Cys-1038, and His-1039 each contribute to the Zn(2+) site. Basic residues predominate over residues 1033-1043 (KKYKHCHGRNA).

The protein belongs to the SecA family. Monomer and homodimer. Part of the essential Sec protein translocation apparatus which comprises SecA, SecYEG and auxiliary proteins SecDF. Other proteins may also be involved. The cofactor is Zn(2+).

It localises to the cell inner membrane. The protein resides in the cytoplasm. It catalyses the reaction ATP + H2O + cellular proteinSide 1 = ADP + phosphate + cellular proteinSide 2.. Functionally, part of the Sec protein translocase complex. Interacts with the SecYEG preprotein conducting channel. Has a central role in coupling the hydrolysis of ATP to the transfer of proteins into and across the cell membrane, serving as an ATP-driven molecular motor driving the stepwise translocation of polypeptide chains across the membrane. This chain is Protein translocase subunit SecA, found in Chloroherpeton thalassium (strain ATCC 35110 / GB-78).